A 563-amino-acid chain; its full sequence is Nicalin (563 aa).

The first 29 residues, Met-1–Gly-29, serve as a signal peptide directing secretion. At Ser-30–Pro-522 the chain is on the lumenal side. A glycan (N-linked (GlcNAc...) asparagine) is linked at Asn-232. A helical transmembrane segment spans residues Ala-523–Ile-543. The Cytoplasmic segment spans residues Ala-544–Phe-563.

This sequence belongs to the nicastrin family. In terms of assembly, may interact with the levamisole-sensitive nicotinic acetylcholine receptor (L-AChR). May interact with nra-4 in the ER. In terms of tissue distribution, expressed in body wall, pharyngeal, and vulval muscles, excretory canal cell, head and motor neurons, and vulval epithelium.

The protein localises to the endoplasmic reticulum membrane. Functionally, involved in the recognition and selection of protein complexes to exit the endoplasmic reticulum (ER). In muscles, regulates levamisole-sensitive nicotinic acetylcholine receptor (L-AChR) subunit composition, possibly by allowing only specific L-AChR subunit combinations to exit the ER. Specifically, may promote the inclusion of alpha subunits unc-38 and unc-29 into L-AChR. Regulates L-AChR sensitivity to agonists such as nicotine and levamisole at neuro-muscular junctions. In touch neurons, may prevent ER exit of incorrectly folded mec-4-mec-10 ion channel. In Caenorhabditis elegans, this protein is Nicalin.